Consider the following 206-residue polypeptide: LexA repressor (206 aa).

Positions 28–48 form a DNA-binding region, H-T-H motif; sequence RAEIARRLGFKSANAAEEHLK. Catalysis depends on for autocatalytic cleavage activity residues Ser123 and Lys160.

It belongs to the peptidase S24 family. Homodimer.

It carries out the reaction Hydrolysis of Ala-|-Gly bond in repressor LexA.. Functionally, represses a number of genes involved in the response to DNA damage (SOS response), including recA and lexA. In the presence of single-stranded DNA, RecA interacts with LexA causing an autocatalytic cleavage which disrupts the DNA-binding part of LexA, leading to derepression of the SOS regulon and eventually DNA repair. This is LexA repressor from Shewanella halifaxensis (strain HAW-EB4).